Reading from the N-terminus, the 128-residue chain is UPF0292 protein MJ1624 (128 aa).

The Toprim domain occupies 23 to 105 (EKPIIVEGKR…KVNTKIRHEI (83 aa)). Residues glutamate 29, aspartate 74, and aspartate 76 each coordinate Mg(2+).

Belongs to the UPF0292 family. Requires Mg(2+) as cofactor.

The chain is UPF0292 protein MJ1624 from Methanocaldococcus jannaschii (strain ATCC 43067 / DSM 2661 / JAL-1 / JCM 10045 / NBRC 100440) (Methanococcus jannaschii).